A 183-amino-acid chain; its full sequence is Beta-defensin 129 (183 aa).

The signal sequence occupies residues 1-19 (MKLLFPIFASLMLQYQVNT). 3 cysteine pairs are disulfide-bonded: cysteine 27–cysteine 53, cysteine 34–cysteine 48, and cysteine 38–cysteine 54. The interval 141-183 (TATSTKSNTKESRDSATASPPPAPPPPNILPTPSLELEEAEEQ) is disordered. Pro residues predominate over residues 159-170 (SPPPAPPPPNIL).

The protein belongs to the beta-defensin family.

Its subcellular location is the secreted. Has antibacterial activity. This Pan troglodytes (Chimpanzee) protein is Beta-defensin 129 (DEFB129).